Consider the following 422-residue polypeptide: Serine--tRNA ligase (422 aa).

Residue 227-229 coordinates L-serine; that stretch reads TSE. ATP is bound by residues 258 to 260 and valine 274; that span reads RRE. Residue glutamate 281 coordinates L-serine. 345–348 provides a ligand contact to ATP; that stretch reads ELTS. Residue threonine 380 coordinates L-serine.

The protein belongs to the class-II aminoacyl-tRNA synthetase family. Type-1 seryl-tRNA synthetase subfamily. In terms of assembly, homodimer. The tRNA molecule binds across the dimer.

The protein resides in the cytoplasm. The enzyme catalyses tRNA(Ser) + L-serine + ATP = L-seryl-tRNA(Ser) + AMP + diphosphate + H(+). It catalyses the reaction tRNA(Sec) + L-serine + ATP = L-seryl-tRNA(Sec) + AMP + diphosphate + H(+). It functions in the pathway aminoacyl-tRNA biosynthesis; selenocysteinyl-tRNA(Sec) biosynthesis; L-seryl-tRNA(Sec) from L-serine and tRNA(Sec): step 1/1. In terms of biological role, catalyzes the attachment of serine to tRNA(Ser). Is also able to aminoacylate tRNA(Sec) with serine, to form the misacylated tRNA L-seryl-tRNA(Sec), which will be further converted into selenocysteinyl-tRNA(Sec). This is Serine--tRNA ligase from Thermobifida fusca (strain YX).